A 557-amino-acid chain; its full sequence is MSQDENIVKAVEESAEPAQVILGEDGKPLSKKALKKLQKEQEKQRKKEERALQLEAEREAREKKAAAEDTAKDNYGKLPLIQSRDSDRTGQKRVKFVDLDEAKDSDKEVLFRARVHNTRQQGATLAFLTLRQQASLIQGLVKANKEGTISKNMVKWAGSLNLESIVLVRGIVKKVDEPIKSATVQNLEIHITKIYTISETPEALPILLEDASRSEAEAEAAGLPVVNLDTRLDYRVIDLRTVTNQAIFRIQAGVCELFREYLATKKFTEVHTPKLLGAPSEGGSSVFEVTYFKGKAYLAQSPQFNKQQLIVADFERVYEIGPVFRAENSNTHRHMTEFTGLDMEMAFEEHYHEVLDTLSELFVFIFSELPKRFAHEIELVRKQYPVEEFKLPKDGKMVRLTYKEGIEMLRAAGKEIGDFEDLSTENEKFLGKLVRDKYDTDFYILDKFPLEIRPFYTMPDPANPKYSNSYDFFMRGEEILSGAQRIHDHALLQERMKAHGLSPEDPGLKDYCDGFSYGCPPHAGGGIGLERVVMFYLDLKNIRRASLFPRDPKRLRP.

The span at 1-12 (MSQDENIVKAVE) shows a compositional bias: basic and acidic residues. The disordered stretch occupies residues 1–74 (MSQDENIVKA…AAAEDTAKDN (74 aa)). Position 2 is an N-acetylserine (S2). Phosphoserine is present on S14. Residues 37 to 74 (LQKEQEKQRKKEERALQLEAEREAREKKAAAEDTAKDN) show a composition bias toward basic and acidic residues. E281 contributes to the L-aspartate binding site. S301 bears the Phosphoserine mark. The aspartate stretch occupies residues 303 to 306 (QFNK). R325 lines the L-aspartate pocket. Residues 325-327 (RAE), 333-335 (RHM), and E478 contribute to the ATP site. S481 and R485 together coordinate L-aspartate. Phosphoserine is present on S502. 528-531 (GLER) is a binding site for ATP. S546 carries the phosphoserine modification.

The protein belongs to the class-II aminoacyl-tRNA synthetase family. Type 2 subfamily. As to quaternary structure, homodimer.

It localises to the cytoplasm. The catalysed reaction is tRNA(Asp) + L-aspartate + ATP = L-aspartyl-tRNA(Asp) + AMP + diphosphate. This chain is Aspartate--tRNA ligase, cytoplasmic (DPS1), found in Saccharomyces cerevisiae (strain ATCC 204508 / S288c) (Baker's yeast).